Here is a 124-residue protein sequence, read N- to C-terminus: Small ribosomal subunit protein uS12 (124 aa).

Residues 1–22 (MATINQLVRKPRSRKVAKSDVP) form a disordered region. Asp-89 is subject to 3-methylthioaspartic acid. The disordered stretch occupies residues 104–124 (TAGVNDRRQGRSKYGAKRGKS). The segment covering 113–124 (GRSKYGAKRGKS) has biased composition (basic residues).

It belongs to the universal ribosomal protein uS12 family. As to quaternary structure, part of the 30S ribosomal subunit. Contacts proteins S8 and S17. May interact with IF1 in the 30S initiation complex.

In terms of biological role, with S4 and S5 plays an important role in translational accuracy. Interacts with and stabilizes bases of the 16S rRNA that are involved in tRNA selection in the A site and with the mRNA backbone. Located at the interface of the 30S and 50S subunits, it traverses the body of the 30S subunit contacting proteins on the other side and probably holding the rRNA structure together. The combined cluster of proteins S8, S12 and S17 appears to hold together the shoulder and platform of the 30S subunit. The sequence is that of Small ribosomal subunit protein uS12 from Hahella chejuensis (strain KCTC 2396).